The sequence spans 150 residues: Transcription antitermination protein NusB (150 aa).

It belongs to the NusB family.

In terms of biological role, involved in transcription antitermination. Required for transcription of ribosomal RNA (rRNA) genes. Binds specifically to the boxA antiterminator sequence of the ribosomal RNA (rrn) operons. This Streptococcus pyogenes serotype M4 (strain MGAS10750) protein is Transcription antitermination protein NusB.